We begin with the raw amino-acid sequence, 132 residues long: uncharacterized protein (132 aa).

3 helical membrane-spanning segments follow: residues 28–48, 59–79, and 106–126; these read LLRL…LIYP, ILPS…LFSY, and LLVA…VIEI.

The protein resides in the membrane. This is an uncharacterized protein from Schizosaccharomyces pombe (strain 972 / ATCC 24843) (Fission yeast).